The primary structure comprises 564 residues: NAD-dependent malic enzyme (564 aa).

The active-site Proton donor is the tyrosine 102. Arginine 155 lines the NAD(+) pocket. Lysine 173 serves as the catalytic Proton acceptor. Glutamate 244, aspartate 245, and aspartate 268 together coordinate a divalent metal cation. 2 residues coordinate NAD(+): aspartate 268 and asparagine 417.

This sequence belongs to the malic enzymes family. In terms of assembly, homotetramer. The cofactor is Mg(2+). Requires Mn(2+) as cofactor.

The catalysed reaction is (S)-malate + NAD(+) = pyruvate + CO2 + NADH. It carries out the reaction oxaloacetate + H(+) = pyruvate + CO2. In Pseudomonas aeruginosa (strain LESB58), this protein is NAD-dependent malic enzyme.